Consider the following 549-residue polypeptide: Oxygen-dependent choline dehydrogenase (549 aa).

4–33 (DFVIIGSGSAGSALAYRLSEDGRNSVIVLE) provides a ligand contact to FAD. His465 functions as the Proton acceptor in the catalytic mechanism.

The protein belongs to the GMC oxidoreductase family. FAD serves as cofactor.

The protein localises to the cell membrane. The catalysed reaction is choline + A = betaine aldehyde + AH2. The enzyme catalyses betaine aldehyde + NAD(+) + H2O = glycine betaine + NADH + 2 H(+). Its pathway is amine and polyamine biosynthesis; betaine biosynthesis via choline pathway; betaine aldehyde from choline (cytochrome c reductase route): step 1/1. Its function is as follows. Involved in the biosynthesis of the osmoprotectant glycine betaine. Catalyzes the oxidation of choline to betaine aldehyde and betaine aldehyde to glycine betaine at the same rate. This Rhizobium meliloti (strain 1021) (Ensifer meliloti) protein is Oxygen-dependent choline dehydrogenase.